The sequence spans 50 residues: Large ribosomal subunit protein bL32A (50 aa).

Residues 1 to 19 (MAVPKRRKSRSNTRHRRSQ) are compositionally biased toward basic residues. Positions 1-21 (MAVPKRRKSRSNTRHRRSQWK) are disordered.

This sequence belongs to the bacterial ribosomal protein bL32 family.

In Saccharopolyspora erythraea (strain ATCC 11635 / DSM 40517 / JCM 4748 / NBRC 13426 / NCIMB 8594 / NRRL 2338), this protein is Large ribosomal subunit protein bL32A.